Reading from the N-terminus, the 466-residue chain is Coagulation factor VII (466 aa).

The signal sequence occupies residues 1–20 (MVSQALRLLCLLLGLQGCLA). The propeptide occupies 21–60 (AGGVAEASGGETRDMPWKPGPHRVFITQEEAHGVLHRRRR). Residues 61 to 105 (ANAFLEELRPGSLERECKEEQCSFEEAREIFKDLERTKLFWISYS) enclose the Gla domain. A 4-carboxyglutamate mark is found at E66, E67, E74, E76, E79, E80, E85, E86, E89, and E95. Cysteines 77 and 82 form a disulfide. The EGF-like 1; calcium-binding domain occupies 106–142 (DGDQCASSPCQNGGSCKDQLQSYICFCLPAFEGRNCE). Disulfide bonds link C110-C121, C115-C130, C132-C141, C151-C162, C158-C172, C174-C187, C195-C322, C219-C224, C238-C254, and C370-C389. A glycan (O-linked (Glc...) serine; alternate) is linked at S112. A glycan (O-linked (Xyl...) serine; alternate) is linked at S112. S120 carries an O-linked (Fuc) serine glycan. D123 is modified ((3R)-3-hydroxyaspartate). Positions 147–188 (DQLICVNENGGCEQYCSDHTGTKRSCRCHEGYSLLADGVSCT) constitute an EGF-like 2 domain. An N-linked (GlcNAc...) asparagine glycan is attached at N205. Positions 213 to 452 (IVGGKVCPKG…YIEWLQKLMR (240 aa)) constitute a Peptidase S1 domain. Active-site charge relay system residues include H253 and D302. Residue N382 is glycosylated (N-linked (GlcNAc...) asparagine). D398 lines the substrate pocket. The cysteines at positions 400 and 428 are disulfide-linked. S404 functions as the Charge relay system in the catalytic mechanism.

This sequence belongs to the peptidase S1 family. In terms of assembly, heterodimer of a light chain and a heavy chain linked by a disulfide bond. The vitamin K-dependent, enzymatic carboxylation of some glutamate residues allows the modified protein to bind calcium. Post-translationally, the iron and 2-oxoglutarate dependent 3-hydroxylation of aspartate and asparagine is (R) stereospecific within EGF domains. In terms of processing, O-glycosylated. O-fucosylated by POFUT1 on a conserved serine or threonine residue found in the consensus sequence C2-X(4,5)-[S/T]-C3 of EGF domains, where C2 and C3 are the second and third conserved cysteines. Can be either O-glucosylated or O-xylosylated at Ser-112 by POGLUT1.

Its subcellular location is the secreted. It carries out the reaction Selective cleavage of Arg-|-Ile bond in factor X to form factor Xa.. In terms of biological role, initiates the extrinsic pathway of blood coagulation. Serine protease that circulates in the blood in a zymogen form. Factor VII is converted to factor VIIa by factor Xa, factor XIIa, factor IXa, or thrombin by minor proteolysis. In the presence of tissue factor and calcium ions, factor VIIa then converts factor X to factor Xa by limited proteolysis. Factor VIIa also converts factor IX to factor IXa in the presence of tissue factor and calcium. This Pan paniscus (Pygmy chimpanzee) protein is Coagulation factor VII (F7).